A 310-amino-acid polypeptide reads, in one-letter code: MKITVIGAGNVGATTAFRIADKKLARELVLLDVVEGIPQGKGLDMYETGPVGLFDTKITGSNDYADTADSDIVIITAGLPRKPGMTREDLLMKNAGIVKEVTDNIMKHSKNPIIIVVSNPLDIMTHVAWVRSGLPKERVIGMAGVLDAARFRSFIAMELGVSMQDINACVLGGHGDAMVPVVKYTTVAGIPISDLLPAETIDKLVERTRNGGAEIVEHLKQGSAFYAPASSVVEMVESIVLDRKRVLPCAVGLEGQYGIDKTFVGVPVKLGRNGVEQIYEINLDQADLDLLQKSAKIVDENCKMLESTIG.

NAD(+) is bound by residues 7–12 (GAGNVG) and Asp32. Substrate is bound by residues Arg81 and Arg87. NAD(+) is bound by residues Asn94 and 117-119 (VSN). 2 residues coordinate substrate: Asn119 and Arg150. Catalysis depends on His174, which acts as the Proton acceptor.

It belongs to the LDH/MDH superfamily. MDH type 3 family. As to quaternary structure, homotetramer; arranged as a dimer of dimers.

The catalysed reaction is (S)-malate + NAD(+) = oxaloacetate + NADH + H(+). Its function is as follows. Catalyzes the reversible oxidation of malate to oxaloacetate. The protein is Malate dehydrogenase of Chlorobaculum parvum (strain DSM 263 / NCIMB 8327) (Chlorobium vibrioforme subsp. thiosulfatophilum).